A 97-amino-acid chain; its full sequence is Unclassified hydrophobin F (97 aa).

Positions 1-17 (MRVSALAFAAVLSLVSA) are cleaved as a signal peptide. Intrachain disulfides connect cysteine 24/cysteine 75, cysteine 39/cysteine 67, cysteine 40/cysteine 58, and cysteine 76/cysteine 85.

Its subcellular location is the secreted. The protein localises to the cell wall. Functionally, aerial growth, conidiation, and dispersal of filamentous fungi in the environment rely upon a capability of their secreting small amphipathic proteins called hydrophobins (HPBs) with low sequence identity. Class I can self-assemble into an outermost layer of rodlet bundles on aerial cell surfaces, conferring cellular hydrophobicity that supports fungal growth, development and dispersal; whereas Class II form highly ordered films at water-air interfaces through intermolecular interactions but contribute nothing to the rodlet structure. In P.expansum, hydrophobins contribute to germination, tolerance to cold stress and mycotoxins patulin and citrinin production. HfbC, HfbD, HfbE, and HfbF have functional redundancy in fungal surface hydrophobicity. In Penicillium expansum (Blue mold rot fungus), this protein is Unclassified hydrophobin F.